The chain runs to 280 residues: Fructose-1,6-bisphosphatase class 1 (280 aa).

Mg(2+) contacts are provided by Glu64, Asp83, Leu85, and Asp86. Residues 86–89, Tyr189, and Lys220 each bind substrate; that span reads DGSS. Glu226 serves as a coordination point for Mg(2+).

This sequence belongs to the FBPase class 1 family. In terms of assembly, homotetramer. Mg(2+) serves as cofactor.

The protein resides in the cytoplasm. It carries out the reaction beta-D-fructose 1,6-bisphosphate + H2O = beta-D-fructose 6-phosphate + phosphate. It functions in the pathway carbohydrate biosynthesis; gluconeogenesis. The chain is Fructose-1,6-bisphosphatase class 1 from Campylobacter jejuni subsp. doylei (strain ATCC BAA-1458 / RM4099 / 269.97).